The sequence spans 573 residues: Proline--tRNA ligase (573 aa).

The protein belongs to the class-II aminoacyl-tRNA synthetase family. ProS type 1 subfamily. In terms of assembly, homodimer.

The protein localises to the cytoplasm. The enzyme catalyses tRNA(Pro) + L-proline + ATP = L-prolyl-tRNA(Pro) + AMP + diphosphate. Functionally, catalyzes the attachment of proline to tRNA(Pro) in a two-step reaction: proline is first activated by ATP to form Pro-AMP and then transferred to the acceptor end of tRNA(Pro). As ProRS can inadvertently accommodate and process non-cognate amino acids such as alanine and cysteine, to avoid such errors it has two additional distinct editing activities against alanine. One activity is designated as 'pretransfer' editing and involves the tRNA(Pro)-independent hydrolysis of activated Ala-AMP. The other activity is designated 'posttransfer' editing and involves deacylation of mischarged Ala-tRNA(Pro). The misacylated Cys-tRNA(Pro) is not edited by ProRS. The chain is Proline--tRNA ligase from Elusimicrobium minutum (strain Pei191).